A 385-amino-acid chain; its full sequence is 8-amino-7-oxononanoate synthase (385 aa).

Position 21 (R21) interacts with substrate. Pyridoxal 5'-phosphate is bound at residue 108-109; that stretch reads GF. Residue H133 coordinates substrate. Residues S179, H207, and T233 each contribute to the pyridoxal 5'-phosphate site. Position 236 is an N6-(pyridoxal phosphate)lysine (K236). T352 serves as a coordination point for substrate.

Belongs to the class-II pyridoxal-phosphate-dependent aminotransferase family. BioF subfamily. In terms of assembly, homodimer. It depends on pyridoxal 5'-phosphate as a cofactor.

The enzyme catalyses 6-carboxyhexanoyl-[ACP] + L-alanine + H(+) = (8S)-8-amino-7-oxononanoate + holo-[ACP] + CO2. It participates in cofactor biosynthesis; biotin biosynthesis. Catalyzes the decarboxylative condensation of pimeloyl-[acyl-carrier protein] and L-alanine to produce 8-amino-7-oxononanoate (AON), [acyl-carrier protein], and carbon dioxide. In Salmonella typhimurium (strain LT2 / SGSC1412 / ATCC 700720), this protein is 8-amino-7-oxononanoate synthase.